Consider the following 174-residue polypeptide: Large ribosomal subunit protein uL10 (174 aa).

Belongs to the universal ribosomal protein uL10 family. In terms of assembly, part of the ribosomal stalk of the 50S ribosomal subunit. The N-terminus interacts with L11 and the large rRNA to form the base of the stalk. The C-terminus forms an elongated spine to which L12 dimers bind in a sequential fashion forming a multimeric L10(L12)X complex.

Forms part of the ribosomal stalk, playing a central role in the interaction of the ribosome with GTP-bound translation factors. The protein is Large ribosomal subunit protein uL10 of Rubrobacter xylanophilus (strain DSM 9941 / JCM 11954 / NBRC 16129 / PRD-1).